We begin with the raw amino-acid sequence, 184 residues long: Large ribosomal subunit protein uL6 (184 aa).

Belongs to the universal ribosomal protein uL6 family. Part of the 50S ribosomal subunit.

In terms of biological role, this protein binds to the 23S rRNA, and is important in its secondary structure. It is located near the subunit interface in the base of the L7/L12 stalk, and near the tRNA binding site of the peptidyltransferase center. The polypeptide is Large ribosomal subunit protein uL6 (Thermosipho melanesiensis (strain DSM 12029 / CIP 104789 / BI429)).